Here is a 301-residue protein sequence, read N- to C-terminus: MTEKHRTPDGLVIVDKPSGFTSHDVVAKMRGIARTRRVGHAGTLDPMATGVLVLGVEKATKLLGHLALTEKEYLGTIRLGQNTLTDDAEGEIISSTDASRVTRDAIDAGVAKLSGAIMQVPSKVSAIKIDGVRSYKRAREGEDFEIPARPVTVSSFAVYDVRDAVAEDGTPVLDLVVSVVCSSGTYIRALARDLGADLGVGGHLTALRRTRVGPYKLDAARTLDQLQEELTVMPIAEAAAAAFPRWDVDTKRARLLLNGVRLEMPEEYAGRGAVAVVDPAGRFLALVEEQKGKAKSLAVFG.

Catalysis depends on D45, which acts as the Nucleophile.

It belongs to the pseudouridine synthase TruB family. Type 1 subfamily.

It catalyses the reaction uridine(55) in tRNA = pseudouridine(55) in tRNA. In terms of biological role, responsible for synthesis of pseudouridine from uracil-55 in the psi GC loop of transfer RNAs. The polypeptide is tRNA pseudouridine synthase B (Streptomyces avermitilis (strain ATCC 31267 / DSM 46492 / JCM 5070 / NBRC 14893 / NCIMB 12804 / NRRL 8165 / MA-4680)).